A 149-amino-acid chain; its full sequence is Ribonuclease pancreatic (149 aa).

Positions 1-25 are cleaved as a signal peptide; the sequence is MGLENSLILFSLLVLVLGWVQPSLG. Residues 25–62 form a disordered region; that stretch reads GKESSPDKFKRQHMDTEGSSKSSPTYCNQMRSPQEMTK. The span at 28 to 42 shows a compositional bias: basic and acidic residues; it reads SSPDKFKRQHMDTEG. Positions 32 and 35 each coordinate substrate. The active-site Proton acceptor is histidine 37. Over residues 43-61 the composition is skewed to polar residues; sequence SSKSSPTYCNQMRSPQEMT. 4 disulfide bridges follow: cysteine 51–cysteine 109, cysteine 65–cysteine 120, cysteine 83–cysteine 135, and cysteine 90–cysteine 97. Residues 66-70 and lysine 91 contribute to the substrate site; that span reads KPVNT. Histidine 144 (proton donor) is an active-site residue.

Belongs to the pancreatic ribonuclease family. In terms of assembly, monomer. Interacts with and forms tight 1:1 complexes with RNH1. Dimerization of two such complexes may occur. Interaction with RNH1 inhibits this protein.

It is found in the secreted. It catalyses the reaction an [RNA] containing cytidine + H2O = an [RNA]-3'-cytidine-3'-phosphate + a 5'-hydroxy-ribonucleotide-3'-[RNA].. The enzyme catalyses an [RNA] containing uridine + H2O = an [RNA]-3'-uridine-3'-phosphate + a 5'-hydroxy-ribonucleotide-3'-[RNA].. Functionally, endonuclease that catalyzes the cleavage of RNA on the 3' side of pyrimidine nucleotides. Acts on single-stranded and double-stranded RNA. This is Ribonuclease pancreatic (RNASE1) from Sundamys muelleri (Mueller's giant sunda rat).